Here is a 328-residue protein sequence, read N- to C-terminus: UPF0324 membrane protein AF_1621 (328 aa).

A run of 11 helical transmembrane segments spans residues 21–39, 43–60, 73–95, 101–123, 130–152, 162–184, 191–213, 223–240, 245–267, 271–293, and 305–327; these read LQML…IINL, ALEP…AGNL, YVPF…PYLG, IVAA…SSRL, SILL…SPLI, AIMI…AHYA, FAVL…QLFG, GIRI…SIIY, FYVP…YLPG, QALR…YTVN, and LFAS…GSGA.

Belongs to the UPF0324 family.

The protein localises to the cell membrane. The polypeptide is UPF0324 membrane protein AF_1621 (Archaeoglobus fulgidus (strain ATCC 49558 / DSM 4304 / JCM 9628 / NBRC 100126 / VC-16)).